The sequence spans 283 residues: Methyltransferase cpsF (283 aa).

The protein belongs to the methyltransferase superfamily. LaeA methyltransferase family.

The catalysed reaction is campesine A + S-adenosyl-L-methionine = campesine B + S-adenosyl-L-homocysteine + H(+). Its pathway is alkaloid biosynthesis. Methyltransferase; part of the gene cluster that mediates the biosynthesis of campesine G, a dimeric indole piperazine alkaloid that shows good insecticidal activity Galleria mellonella. Within the pathway, cpsF methylates campesine A at N13 of piperazine ring to produce campesine B. The non-canonical non-ribosomal peptide synthetase cpsA catalyzes the first steps of the pathway by producing L-tryptophanal and L-valinal from their respective amino-acids. These products condensate spontaneously to form trypyl-valyl pyrazine also known as didehydrocampesine A. The NmrA-like family domain-containing oxidoreductase cpsB is the next enzyme in cps pathway and reduces the unstable didehydrocampesine A to campesine A. The methyltransferase cpsF and the acetyltransferase cpsE both recognize N13 of piperazine ring to carry out methylation and acetylation of campesine A to produce campesine C and B, respectively. The cytochrome P450 monooxygenase cpsD then acts as a dimerase that catalyzes oxidative heterocoupling between campesine B and C to produce heterodimers with unexpected 6/5/6/6/6/6/5/6 eight-ring scaffold called campesine D. Finally,the cytochrome P450 monooxygenase cpsC is a regioselective dehydrogenase that catalyzes dehydrogenation reaction towards C2-N1 to produce campesine G. This is Methyltransferase cpsF from Aspergillus campestris (strain IBT 28561).